Consider the following 171-residue polypeptide: Putative lipoprotein LppO (171 aa).

A signal peptide spans 1-28 (MTDPRHTVRIAVGATALGVSALGATLPA). Cys-29 is lipidated: N-palmitoyl cysteine. A lipid anchor (S-diacylglycerol cysteine) is attached at Cys-29.

It is found in the cell membrane. This chain is Putative lipoprotein LppO (lppO), found in Mycobacterium tuberculosis (strain CDC 1551 / Oshkosh).